The chain runs to 929 residues: ATP-dependent RNA helicase DDX42 (929 aa).

K5 carries the post-translational modification N6-acetyllysine. An Omega-N-methylarginine modification is found at R12. 2 disordered regions span residues 25-119 (KKEE…LEAF) and 182-203 (EYDS…LPPI). Residues 35-52 (SHSAFGAASSSSGFGKSA) show a composition bias toward low complexity. The residue at position 58 (S58) is a Phosphoserine. Positions 70–84 (DEENAYFEDEEEDSS) are enriched in acidic residues. A phosphoserine mark is found at S96, S104, S109, and S111. Positions 116-157 (LEAFMAEVEDQAARDMKRLEEKDKERKNVKGIRDDIEEEDDQ) form a coiled coil. At S185 the chain carries Phosphoserine. The Q motif motif lies at 253–281 (SSFAHFGFDEQLMHQIRKSEYTQPTPIQC). Positions 284-459 (VPVALSGRDM…RDILIDPIRV (176 aa)) constitute a Helicase ATP-binding domain. 297-304 (AKTGSGKT) provides a ligand contact to ATP. Residues 407–410 (DEAD) carry the DEAD box motif. Residues 487–632 (WLTRRLVEFT…HVSKELLDLA (146 aa)) form the Helicase C-terminal domain. 2 disordered regions span residues 662 to 682 (ERPG…VMSN) and 723 to 929 (GTSS…RWDS). The segment covering 723 to 737 (GTSSAGASGWTSAGS) has biased composition (low complexity). Polar residues-rich tracts occupy residues 738–777 (LNSV…SSAP) and 787–798 (GVNNTASGNNSR). The necessary for interaction with TP53BP2 stretch occupies residues 739 to 828 (NSVPTNSAQQ…RHSHGDGGNR (90 aa)). Residues 821-911 (SHGDGGNRHG…KVDSKTDKTP (91 aa)) show a composition bias toward basic and acidic residues. K894 participates in a covalent cross-link: Glycyl lysine isopeptide (Lys-Gly) (interchain with G-Cter in SUMO2).

Belongs to the DEAD box helicase family. DDX42 subfamily. As to quaternary structure, transient component of the SF3B subcomplex of the 17S U2 SnRNP complex. Interacts (via the C-terminus) with TP53BP2; the interaction is not inhibitied by TP53BP2 ubiquitination and is independent of p53/TP53.

It localises to the cytoplasm. The protein resides in the nucleus. It catalyses the reaction ATP + H2O = ADP + phosphate + H(+). In terms of biological role, ATP-dependent RNA helicase that binds to partially double-stranded RNAs (dsRNAs) in order to unwind RNA secondary structures. Unwinding is promoted in the presence of single-strand binding proteins. Also mediates RNA duplex formation thereby displacing the single-strand RNA binding protein. ATP and ADP modulate its activity: ATP binding and hydrolysis by DDX42 triggers RNA strand separation, whereas the ADP-bound form of the protein triggers annealing of complementary RNA strands. Required for assembly of the 17S U2 SnRNP complex of the spliceosome, a large ribonucleoprotein complex that removes introns from transcribed pre-mRNAs: DDX42 associates transiently with the SF3B subcomplex of the 17S U2 SnRNP complex and is released after fulfilling its role in the assembly of 17S U2 SnRNP. Involved in the survival of cells by interacting with TP53BP2 and thereby counteracting the apoptosis-stimulating activity of TP53BP2. Relocalizes TP53BP2 to the cytoplasm. The sequence is that of ATP-dependent RNA helicase DDX42 (Ddx42) from Mus musculus (Mouse).